Reading from the N-terminus, the 209-residue chain is Rac-like GTP-binding protein ARAC7 (209 aa).

Position 13–20 (13–20 (GDGAVGKT)) interacts with GTP. Residues 35 to 43 (YIPTVFDNF) carry the Effector region motif. Residues 60–64 (DTAGQ) and 118–121 (TKLD) contribute to the GTP site. Residues Cys-196, Cys-203, and Cys-206 are each lipidated (S-palmitoyl cysteine).

This sequence belongs to the small GTPase superfamily. Rho family. In terms of processing, although this sequence has a C-terminal -CXXX, it is palmitoylated at Cys-206, rather than prenylated.

The protein resides in the membrane. Functionally, acts as a negative regulator of abscisic acid (ABA) responses. This is Rac-like GTP-binding protein ARAC7 (ARAC7) from Arabidopsis thaliana (Mouse-ear cress).